Here is a 335-residue protein sequence, read N- to C-terminus: UPF0353 protein MUL_1490 (335 aa).

A run of 2 helical transmembrane segments spans residues 18 to 38 (WFFL…VLQL) and 67 to 87 (IPAM…AGPT). The 201-residue stretch at 98 to 298 (VVMLVIDVSQ…SVYVSLQQQI (201 aa)) folds into the VWFA domain. A helical transmembrane segment spans residues 309–329 (MGWLRLGALVLVAAALAALLI).

It belongs to the UPF0353 family.

It localises to the cell membrane. This Mycobacterium ulcerans (strain Agy99) protein is UPF0353 protein MUL_1490.